Consider the following 1277-residue polypeptide: DNA repair protein RAD5B (1277 aa).

Residues 271–293 are disordered; sequence KLEQENDDLFSSGDSDGTSAKRR. A Helicase ATP-binding domain is found at 674–871; the sequence is PTATQMARGG…YSLLCFLHVE (198 aa). ATP is bound at residue 687–694; it reads DAMGLGKT. The short motif at 822–825 is the DEAH box element; that stretch reads DEAH. An RING-type zinc finger spans residues 1040-1080; it reads CPICLESADDPVLTPCAHRMCRECLLTSWRSPSCGLCPICR. In terms of domain architecture, Helicase C-terminal spans 1113–1277; that stretch reads ELLKCLEKIK…RLEELKMLFR (165 aa).

Belongs to the SNF2/RAD54 helicase family. RAD16 subfamily.

The protein localises to the nucleus. Functionally, possesses intrinsic ATP-dependent nucleosome-remodeling activity. This activity may be required for DNA repair. Does not seem to be required for DNA repair and regulation of homologous recombination (HR). This is DNA repair protein RAD5B from Arabidopsis thaliana (Mouse-ear cress).